A 194-amino-acid polypeptide reads, in one-letter code: Myelin-associated neurite-outgrowth inhibitor (194 aa).

An N-acetylmethionine modification is found at Met-1. The Cytoplasmic segment spans residues 1 to 18 (MNPVYSPGSSGVPYANAK). Residue Ser-6 is modified to Phosphoserine. The chain crosses the membrane as a helical span at residues 19–41 (GIGYPAGFPVGYAAAPAYSPNMY). Over 42-141 (PGANPTFQTG…PAPIPPPRGS (100 aa)) the chain is Extracellular. Asn-45 is a glycosylation site (N-linked (GlcNAc...) asparagine). The chain crosses the membrane as a helical span at residues 142–163 (GVTMGMVAGTTMAMSAGTLLTA). Over 164 to 194 (HSPTPVAPHPVTVPTYRAPGTPTYSYVPPQW) the chain is Cytoplasmic.

It belongs to the FAM168 family. As to quaternary structure, may form homodimers. May interact with DAZAP2, FAM168A, PRDX6, RBM6, TMTC1 and YPEL2. Interacts with CDC27. Post-translationally, N-glycosylated. Predominantly expressed in the brain, including olfactory bulb, cortex and cerebellum (at protein level).

It localises to the cytoplasm. It is found in the perinuclear region. Its subcellular location is the cell membrane. The protein resides in the cell projection. The protein localises to the axon. Its function is as follows. Inhibitor of neuronal axonal outgrowth. Acts as a negative regulator of CDC42 and STAT3 and a positive regulator of STMN2. Positive regulator of CDC27. The polypeptide is Myelin-associated neurite-outgrowth inhibitor (Fam168b) (Mus musculus (Mouse)).